The sequence spans 720 residues: NAD(+) hydrolase ApTIR (720 aa).

Positions 1–131 constitute a TIR domain; sequence MRYDAFISYS…AVPPALRGVF (131 aa). Residues 10 to 11 and Ala48 contribute to the NAD(+) site; that span reads SH. Glu84 is a catalytic residue. Residues 192–211 form a helical membrane-spanning segment; it reads GALAVVCALLLLVAGTAVAW. Disordered regions lie at residues 231-275 and 292-359; these read ATAA…AVAE and EGIA…EEAV. Composition is skewed to basic and acidic residues over residues 256–268 and 307–359; these read EQQR…EEAR and AEAR…EEAV. Residues 313-362 are a coiled coil; sequence RGVADAEKAKANRAAAEAERQRKIAADEQRKAHEAAAEAERQREEAVKQQ. 7 WD repeats span residues 420–459, 465–504, 510–549, 555–594, 600–639, 645–684, and 690–720; these read GHTA…APRR, SSTA…APRR, GHTD…APRR, DHTA…APRR, and GHTD…CCGM.

The protein localises to the cell membrane. It carries out the reaction NAD(+) + H2O = ADP-D-ribose + nicotinamide + H(+). In terms of biological role, NAD(+) hydrolase (NADase) that catalyzes cleavage of NAD(+) into ADP-D-ribose (ADPR) and nicotinamide. The protein is NAD(+) hydrolase ApTIR of Actinoplanes sp. (strain ATCC 31044 / CBS 674.73 / SE50/110).